The primary structure comprises 61 residues: Putative antitoxin VapB13 (61 aa).

Belongs to the UPF0165 family.

Possibly the antitoxin component of a type II toxin-antitoxin (TA) system. Its cognate toxin is VapC13 (Potential). In Archaeoglobus fulgidus (strain ATCC 49558 / DSM 4304 / JCM 9628 / NBRC 100126 / VC-16), this protein is Putative antitoxin VapB13 (vapB13).